Consider the following 189-residue polypeptide: Peptide deformylase (189 aa).

Fe cation contacts are provided by cysteine 93 and histidine 135. Glutamate 136 is a catalytic residue. Histidine 139 serves as a coordination point for Fe cation.

It belongs to the polypeptide deformylase family. It depends on Fe(2+) as a cofactor.

It carries out the reaction N-terminal N-formyl-L-methionyl-[peptide] + H2O = N-terminal L-methionyl-[peptide] + formate. Removes the formyl group from the N-terminal Met of newly synthesized proteins. Requires at least a dipeptide for an efficient rate of reaction. N-terminal L-methionine is a prerequisite for activity but the enzyme has broad specificity at other positions. This is Peptide deformylase from Karelsulcia muelleri (strain GWSS) (Sulcia muelleri).